The following is a 258-amino-acid chain: Phosphate import ATP-binding protein PstB (258 aa).

The ABC transporter domain occupies 5–247 (IDVSGLTAYY…ERIFSNPSVQ (243 aa)). Position 37-44 (37-44 (GPSGCGKS)) interacts with ATP.

The protein belongs to the ABC transporter superfamily. Phosphate importer (TC 3.A.1.7) family. As to quaternary structure, the complex is composed of two ATP-binding proteins (PstB), two transmembrane proteins (PstC and PstA) and a solute-binding protein (PstS).

The protein localises to the cell membrane. The enzyme catalyses phosphate(out) + ATP + H2O = ADP + 2 phosphate(in) + H(+). Its function is as follows. Part of the ABC transporter complex PstSACB involved in phosphate import. Responsible for energy coupling to the transport system. The polypeptide is Phosphate import ATP-binding protein PstB (Streptomyces avermitilis (strain ATCC 31267 / DSM 46492 / JCM 5070 / NBRC 14893 / NCIMB 12804 / NRRL 8165 / MA-4680)).